Here is a 207-residue protein sequence, read N- to C-terminus: Transcription factor bHLH149 (207 aa).

A disordered region spans residues Met-1–Glu-25. Residues Lys-132–Leu-181 enclose the bHLH domain.

In terms of assembly, homodimer. Interacts with PRE3.

It is found in the nucleus. Atypical bHLH transcription factor probably unable to bind DNA. Negatively regulates brassinosteroid signaling. In Arabidopsis thaliana (Mouse-ear cress), this protein is Transcription factor bHLH149 (BHLH149).